Here is a 207-residue protein sequence, read N- to C-terminus: Holliday junction branch migration complex subunit RuvA (207 aa).

The domain I stretch occupies residues 1–63 (MISSLRGTVL…EDSLQLFGFS (63 aa)). Residues 64 to 142 (GLEQLQVFEL…ACRRPSAPSA (79 aa)) form a domain II region. The tract at residues 142 to 146 (ARRPS) is flexible linker. A domain III region spans residues 147–207 (APSSVSDSVL…RLGPANQAAR (61 aa)).

The protein belongs to the RuvA family. As to quaternary structure, homotetramer. Forms an RuvA(8)-RuvB(12)-Holliday junction (HJ) complex. HJ DNA is sandwiched between 2 RuvA tetramers; dsDNA enters through RuvA and exits via RuvB. An RuvB hexamer assembles on each DNA strand where it exits the tetramer. Each RuvB hexamer is contacted by two RuvA subunits (via domain III) on 2 adjacent RuvB subunits; this complex drives branch migration. In the full resolvosome a probable DNA-RuvA(4)-RuvB(12)-RuvC(2) complex forms which resolves the HJ.

It is found in the cytoplasm. Functionally, the RuvA-RuvB-RuvC complex processes Holliday junction (HJ) DNA during genetic recombination and DNA repair, while the RuvA-RuvB complex plays an important role in the rescue of blocked DNA replication forks via replication fork reversal (RFR). RuvA specifically binds to HJ cruciform DNA, conferring on it an open structure. The RuvB hexamer acts as an ATP-dependent pump, pulling dsDNA into and through the RuvAB complex. HJ branch migration allows RuvC to scan DNA until it finds its consensus sequence, where it cleaves and resolves the cruciform DNA. The chain is Holliday junction branch migration complex subunit RuvA from Leifsonia xyli subsp. xyli (strain CTCB07).